The chain runs to 107 residues: MRDNNNNNEKYLIDFLKKVGSMRGSYSGSQIVIFASKDKKDEKIEKKRKIKNLKDKIRSQKRTIELEVENRRLRDRIDGLKSGINELTANLENLKKKSDNQKKDMSY.

Positions 34–107 form a coiled coil; it reads FASKDKKDEK…SDNQKKDMSY (74 aa).

This is an uncharacterized protein from Dictyostelium discoideum (Social amoeba).